Here is a 157-residue protein sequence, read N- to C-terminus: Globin (157 aa).

G1 is modified (N-acetylglycine). Positions 8–155 (SLSADQKAAI…MANIIDAEQK (148 aa)) constitute a Globin domain. Residues H70 and H102 each coordinate heme b.

Belongs to the globin family. As to quaternary structure, monomer.

In Nerita albicilla (Ox-palate nerite), this protein is Globin.